The chain runs to 45 residues: Mu-conotoxin-like Cal 12.1.2d (45 aa).

Disulfide bonds link C3/C16, C11/C28, C18/C33, and C27/C39. W17 carries the post-translational modification 6'-bromotryptophan. Residue P23 is modified to 4-hydroxyproline. 6'-bromotryptophan is present on residues W37 and W38. P40 bears the 4-hydroxyproline mark.

Expressed by the venom duct.

Its subcellular location is the secreted. Mu-conotoxins block voltage-gated sodium channels. This toxin reversibly blocks voltage-gated sodium channel in cephalopods, with no alteration in the voltage dependence of sodium conductance or on the kinetics of inactivation. The polypeptide is Mu-conotoxin-like Cal 12.1.2d (Californiconus californicus (California cone)).